Consider the following 281-residue polypeptide: uncharacterized protein (281 aa).

Positions 242–281 (IDKQSRKKNIIREINDIKSKINDLSNYMDNLISELDDLFD) form a coiled coil.

This is an uncharacterized protein from Acanthamoeba polyphaga (Amoeba).